Consider the following 493-residue polypeptide: Glutamate--tRNA ligase (493 aa).

Positions 10 to 20 match the 'HIGH' region motif; the sequence is PSPTGFVHIGS. Residues cysteine 114, cysteine 116, cysteine 141, and glutamate 143 each coordinate Zn(2+). The short motif at 258 to 262 is the 'KMSKS' region element; it reads KLSKR. Residue lysine 261 coordinates ATP.

Belongs to the class-I aminoacyl-tRNA synthetase family. Glutamate--tRNA ligase type 1 subfamily. In terms of assembly, monomer. It depends on Zn(2+) as a cofactor.

It localises to the cytoplasm. It carries out the reaction tRNA(Glu) + L-glutamate + ATP = L-glutamyl-tRNA(Glu) + AMP + diphosphate. In terms of biological role, catalyzes the attachment of glutamate to tRNA(Glu) in a two-step reaction: glutamate is first activated by ATP to form Glu-AMP and then transferred to the acceptor end of tRNA(Glu). The protein is Glutamate--tRNA ligase of Alkaliphilus metalliredigens (strain QYMF).